A 652-amino-acid chain; its full sequence is Iron-regulated surface determinant protein B (652 aa).

The first 40 residues, methionine 1–alanine 40, serve as a signal peptide directing secretion. The short motif at tyrosine 12–serine 23 is the YSIRK-G/S signaling motif element. A disordered region spans residues alanine 41–valine 75. Positions lysine 54–valine 75 are enriched in low complexity. 2 consecutive NEAT domains span residues serine 151 to threonine 276 and lysine 348 to asparagine 465. Heme is bound by residues methionine 369 and tyrosine 447. Composition is skewed to basic and acidic residues over residues alanine 466–threonine 483 and valine 496–valine 541. The segment at alanine 466–lysine 626 is disordered. Residues glutamate 542 to threonine 555 are compositionally biased toward low complexity. Polar residues-rich tracts occupy residues glutamine 556–serine 579 and asparagine 592–glutamate 622. The short motif at leucine 617–glycine 621 is the LPXTG sorting signal element. Threonine 620 is modified (pentaglycyl murein peptidoglycan amidated threonine). The propeptide at glycine 621–asparagine 652 is removed by sortase.

It belongs to the IsdB family. As to quaternary structure, interacts with host HBA; this interaction allows heme extraction as iron source. Interacts with IsdA.

Its subcellular location is the secreted. The protein resides in the cell wall. Functionally, cell wall-anchored surface receptor that extracts heme from oxidized metHb to enable growth on hemoglobin as a sole iron source. Rapidly extracts heme from hemoglobin and transfers it to IsdA or IsdC, which then relays it to the membrane transporter/IsdEF for internalization. Also promotes resistance to hydrogen peroxide and killing by neutrophils. The chain is Iron-regulated surface determinant protein B (isdB) from Staphylococcus aureus (strain MRSA252).